The following is an 85-amino-acid chain: Prosialokinin (85 aa).

The first 23 residues, 1–23 (MNMFITVQIVIVLVLAVLSEAAS), serve as a signal peptide directing secretion. Residues 24-74 (LPTATERKDAMDEGPNQSDEPEGSVADPSTKDDDYSDSLKQDEKYYKVRLL) constitute a propeptide that is removed on maturation. Positions 26–61 (TATERKDAMDEGPNQSDEPEGSVADPSTKDDDYSDS) are disordered. The span at 52–61 (STKDDDYSDS) shows a compositional bias: basic and acidic residues. The residue at position 84 (methionine 84) is a Methionine amide.

This sequence belongs to the tachykinin family. Expressed exclusively in the medial lobe of female salivary gland. Not detected in female carcass without head and salivary glands. Not detected in male tissues.

It is found in the secreted. In terms of biological role, vasodilatory peptide. Facilitates mosquito blood feeding on vertebrate host. Induces nitric oxide (NO) release in blood vessels through the activation of the nitric oxide synthase (NOS3). Enhances endothelial permeability and induces edema at the site of inoculation in the host. Induces host smooth muscle contraction. Down-regulates production of Th1 cytokines, such as IL2 and IFN-gamma (IFNG), in mouse splenocytes. Up-regulates production of Th2 cytokines, such as IL4 and IL10, in mouse splenocytes. Promotes recruitment of host leukocytes, especially neutrophils and CD8+ T cells, to the bite site. Modulates cytokine production by host macrophages. Modulates populations of monocytes/macrophages, plasmacytoid dendritic cells, B cells, CD4+ T cells, NK and NKT cells, shifting mammalian immunity towards Th2 responses. (Microbial infection) Promotes Semliki Forest virus infection in the host. Functionally, (Microbial infection) Does not affect Zika virus replication in the host. This chain is Prosialokinin, found in Aedes aegypti (Yellowfever mosquito).